Here is a 629-residue protein sequence, read N- to C-terminus: Translation initiation factor IF-2 (629 aa).

A disordered region spans residues 1 to 20 (MAKNIKTNKKPQQVNKKEMS). A tr-type G domain is found at 127 to 297 (HRAPIVTIMG…LLIAEMQDYK (171 aa)). The G1 stretch occupies residues 136-143 (GHVDHGKT). A GTP-binding site is contributed by 136–143 (GHVDHGKT). Residues 161-165 (GITQA) form a G2 region. Residues 183 to 186 (DTPG) form a G3 region. Residues 183–187 (DTPGH) and 237–240 (NKCD) each bind GTP. The tract at residues 237 to 240 (NKCD) is G4. The tract at residues 273 to 275 (SAK) is G5.

This sequence belongs to the TRAFAC class translation factor GTPase superfamily. Classic translation factor GTPase family. IF-2 subfamily.

It is found in the cytoplasm. In terms of biological role, one of the essential components for the initiation of protein synthesis. Protects formylmethionyl-tRNA from spontaneous hydrolysis and promotes its binding to the 30S ribosomal subunits. Also involved in the hydrolysis of GTP during the formation of the 70S ribosomal complex. In Mesoplasma florum (strain ATCC 33453 / NBRC 100688 / NCTC 11704 / L1) (Acholeplasma florum), this protein is Translation initiation factor IF-2.